A 348-amino-acid chain; its full sequence is UDP-3-O-acylglucosamine N-acyltransferase (348 aa).

Catalysis depends on His241, which acts as the Proton acceptor.

This sequence belongs to the transferase hexapeptide repeat family. LpxD subfamily. As to quaternary structure, homotrimer.

The enzyme catalyses a UDP-3-O-[(3R)-3-hydroxyacyl]-alpha-D-glucosamine + a (3R)-hydroxyacyl-[ACP] = a UDP-2-N,3-O-bis[(3R)-3-hydroxyacyl]-alpha-D-glucosamine + holo-[ACP] + H(+). It participates in bacterial outer membrane biogenesis; LPS lipid A biosynthesis. Functionally, catalyzes the N-acylation of UDP-3-O-acylglucosamine using 3-hydroxyacyl-ACP as the acyl donor. Is involved in the biosynthesis of lipid A, a phosphorylated glycolipid that anchors the lipopolysaccharide to the outer membrane of the cell. This is UDP-3-O-acylglucosamine N-acyltransferase from Neisseria meningitidis serogroup B (strain ATCC BAA-335 / MC58).